A 373-amino-acid chain; its full sequence is Carbamoyl phosphate synthase small chain (373 aa).

Residues 1-179 form a CPSase region; that stretch reads MSGKAQLVLE…AYIVEPEGPP (179 aa). L-glutamine contacts are provided by Ser-47, Gly-230, and Gly-232. Residues 182–373 enclose the Glutamine amidotransferase type-1 domain; that stretch reads TVAALDLGIK…QFIELMEGDR (192 aa). Residue Cys-258 is the Nucleophile of the active site. 5 residues coordinate L-glutamine: Phe-259, Gln-262, Asn-300, Gly-302, and Phe-303. Residues His-348 and Glu-350 contribute to the active site.

It belongs to the CarA family. As to quaternary structure, composed of two chains; the small (or glutamine) chain promotes the hydrolysis of glutamine to ammonia, which is used by the large (or ammonia) chain to synthesize carbamoyl phosphate. Tetramer of heterodimers (alpha,beta)4.

It catalyses the reaction hydrogencarbonate + L-glutamine + 2 ATP + H2O = carbamoyl phosphate + L-glutamate + 2 ADP + phosphate + 2 H(+). It carries out the reaction L-glutamine + H2O = L-glutamate + NH4(+). The protein operates within amino-acid biosynthesis; L-arginine biosynthesis; carbamoyl phosphate from bicarbonate: step 1/1. It functions in the pathway pyrimidine metabolism; UMP biosynthesis via de novo pathway; (S)-dihydroorotate from bicarbonate: step 1/3. Its function is as follows. Small subunit of the glutamine-dependent carbamoyl phosphate synthetase (CPSase). CPSase catalyzes the formation of carbamoyl phosphate from the ammonia moiety of glutamine, carbonate, and phosphate donated by ATP, constituting the first step of 2 biosynthetic pathways, one leading to arginine and/or urea and the other to pyrimidine nucleotides. The small subunit (glutamine amidotransferase) binds and cleaves glutamine to supply the large subunit with the substrate ammonia. The protein is Carbamoyl phosphate synthase small chain of Mycolicibacterium paratuberculosis (strain ATCC BAA-968 / K-10) (Mycobacterium paratuberculosis).